The following is a 375-amino-acid chain: N5-carboxyaminoimidazole ribonucleotide synthase (375 aa).

ATP contacts are provided by residues arginine 108, lysine 148, 153–159 (GYDGKGQ), 183–186 (EQYL), glutamate 191, histidine 214, and 268–269 (NE). Residues 112–298 (KQTLQDSGSN…QFDTHIKAIT (187 aa)) enclose the ATP-grasp domain.

This sequence belongs to the PurK/PurT family. In terms of assembly, homodimer.

The enzyme catalyses 5-amino-1-(5-phospho-beta-D-ribosyl)imidazole + hydrogencarbonate + ATP = 5-carboxyamino-1-(5-phospho-D-ribosyl)imidazole + ADP + phosphate + 2 H(+). The protein operates within purine metabolism; IMP biosynthesis via de novo pathway; 5-amino-1-(5-phospho-D-ribosyl)imidazole-4-carboxylate from 5-amino-1-(5-phospho-D-ribosyl)imidazole (N5-CAIR route): step 1/2. Catalyzes the ATP-dependent conversion of 5-aminoimidazole ribonucleotide (AIR) and HCO(3)(-) to N5-carboxyaminoimidazole ribonucleotide (N5-CAIR). This chain is N5-carboxyaminoimidazole ribonucleotide synthase, found in Staphylococcus saprophyticus subsp. saprophyticus (strain ATCC 15305 / DSM 20229 / NCIMB 8711 / NCTC 7292 / S-41).